A 61-amino-acid chain; its full sequence is Short neurotoxin 2 (61 aa).

4 disulfides stabilise this stretch: cysteine 3–cysteine 23, cysteine 17–cysteine 40, cysteine 42–cysteine 53, and cysteine 54–cysteine 59.

Belongs to the three-finger toxin family. Short-chain subfamily. Type I alpha-neurotoxin sub-subfamily. In terms of tissue distribution, expressed by the venom gland.

Its subcellular location is the secreted. Its function is as follows. Binds to muscle nicotinic acetylcholine receptor (nAChR) and inhibit acetylcholine from binding to the receptor, thereby impairing neuromuscular transmission. This Naja annulifera (Banded Egyptian cobra) protein is Short neurotoxin 2.